The chain runs to 205 residues: Glycerol-3-phosphate acyltransferase (205 aa).

The next 6 helical transmembrane spans lie at 8–28, 57–77, 84–104, 118–138, 143–163, and 164–184; these read IALF…GYLA, TPAL…ILIA, ESLQ…PVWL, VFLG…LLIL, IVSL…LINS, and KETF…LVLW.

It belongs to the PlsY family. As to quaternary structure, probably interacts with PlsX.

It is found in the cell inner membrane. The catalysed reaction is an acyl phosphate + sn-glycerol 3-phosphate = a 1-acyl-sn-glycero-3-phosphate + phosphate. The protein operates within lipid metabolism; phospholipid metabolism. Its function is as follows. Catalyzes the transfer of an acyl group from acyl-phosphate (acyl-PO(4)) to glycerol-3-phosphate (G3P) to form lysophosphatidic acid (LPA). This enzyme utilizes acyl-phosphate as fatty acyl donor, but not acyl-CoA or acyl-ACP. The protein is Glycerol-3-phosphate acyltransferase of Prochlorococcus marinus (strain SARG / CCMP1375 / SS120).